A 662-amino-acid chain; its full sequence is Neurexin-2-beta (662 aa).

Gly residues predominate over residues 1–10 (MPPGGSGQGG). Positions 1 to 27 (MPPGGSGQGGCPRRPPALAGPLPPPPP) are disordered. A signal peptide spans 1–46 (MPPGGSGQGGCPRRPPALAGPLPPPPPPPPLPLLLGLLLLLGAAEG). The Extracellular segment spans residues 47-586 (ARVSSSLSTT…EVIRESSSTT (540 aa)). A Laminin G-like domain is found at 87-295 (TTYIFGKGGA…HLRLVGEGPS (209 aa)). Ca(2+) contacts are provided by Asp-139 and Val-156. A glycan (N-linked (GlcNAc...) asparagine) is linked at Asn-186. Ile-238 and Asn-240 together coordinate Ca(2+). A glycan (O-linked (Xyl...) (heparan sulfate) serine) is linked at Ser-350. Disordered regions lie at residues 408-458 (ATQD…LPPT), 476-496 (LLSPRKPAPRPNLRTDGATGA), and 530-557 (LGPGVPTAFEPRRPPPLRPGVTSVPGFP). The chain crosses the membrane as a helical span at residues 587–607 (GMVVGIVAAAALCILILLYAM). At 608 to 662 (YKYRNRDEGSYQVDQSRNYISNSAQSNGAVVKEKAPAAPKTPSKAKKNKDKEYYV) the chain is on the cytoplasmic side. The disordered stretch occupies residues 629–662 (NSAQSNGAVVKEKAPAAPKTPSKAKKNKDKEYYV).

Belongs to the neurexin family. Interacts (via cytoplasmic C-terminal region) with CASK. Isoform Beta 4b binds alpha-dystroglycan and neuroligins NLGN1, NLGN2 and NLGN3. Interacts with CBLN1, CBLN2 and, less avidly, with CBLN4. Interacts with CLSTN3. O-glycosylated; contains heparan sulfate. Heparan sulfate attachment is required for synapse development by mediating interactions with neuroligins. Brain (neuronal synapse).

It localises to the presynaptic cell membrane. In terms of biological role, neuronal cell surface protein that may be involved in cell recognition and cell adhesion. The chain is Neurexin-2-beta (Nrxn2) from Rattus norvegicus (Rat).